The primary structure comprises 353 residues: Holliday junction branch migration complex subunit RuvB (353 aa).

Residues 1 to 183 (MNEPRIVAPQ…FGATYRLDFY (183 aa)) are large ATPase domain (RuvB-L). Residues Leu22, Arg23, Gly64, Lys67, Thr68, Thr69, 130 to 132 (EDF), Arg173, Tyr183, and Arg220 each bind ATP. Thr68 contacts Mg(2+). The tract at residues 184–254 (DTAALRAIVE…LARLALDQLA (71 aa)) is small ATPAse domain (RuvB-S). Positions 257–353 (ELGLDEVDRL…HAASERSSDA (97 aa)) are head domain (RuvB-H). DNA is bound by residues Arg312 and Arg317.

This sequence belongs to the RuvB family. In terms of assembly, homohexamer. Forms an RuvA(8)-RuvB(12)-Holliday junction (HJ) complex. HJ DNA is sandwiched between 2 RuvA tetramers; dsDNA enters through RuvA and exits via RuvB. An RuvB hexamer assembles on each DNA strand where it exits the tetramer. Each RuvB hexamer is contacted by two RuvA subunits (via domain III) on 2 adjacent RuvB subunits; this complex drives branch migration. In the full resolvosome a probable DNA-RuvA(4)-RuvB(12)-RuvC(2) complex forms which resolves the HJ.

It localises to the cytoplasm. It carries out the reaction ATP + H2O = ADP + phosphate + H(+). Functionally, the RuvA-RuvB-RuvC complex processes Holliday junction (HJ) DNA during genetic recombination and DNA repair, while the RuvA-RuvB complex plays an important role in the rescue of blocked DNA replication forks via replication fork reversal (RFR). RuvA specifically binds to HJ cruciform DNA, conferring on it an open structure. The RuvB hexamer acts as an ATP-dependent pump, pulling dsDNA into and through the RuvAB complex. RuvB forms 2 homohexamers on either side of HJ DNA bound by 1 or 2 RuvA tetramers; 4 subunits per hexamer contact DNA at a time. Coordinated motions by a converter formed by DNA-disengaged RuvB subunits stimulates ATP hydrolysis and nucleotide exchange. Immobilization of the converter enables RuvB to convert the ATP-contained energy into a lever motion, pulling 2 nucleotides of DNA out of the RuvA tetramer per ATP hydrolyzed, thus driving DNA branch migration. The RuvB motors rotate together with the DNA substrate, which together with the progressing nucleotide cycle form the mechanistic basis for DNA recombination by continuous HJ branch migration. Branch migration allows RuvC to scan DNA until it finds its consensus sequence, where it cleaves and resolves cruciform DNA. This chain is Holliday junction branch migration complex subunit RuvB, found in Thermomicrobium roseum (strain ATCC 27502 / DSM 5159 / P-2).